We begin with the raw amino-acid sequence, 225 residues long: Transmembrane emp24 domain-containing protein p24delta11 (225 aa).

The first 35 residues, 1–35, serve as a signal peptide directing secretion; it reads MDLLPSRYKIHKTKLRWILTMMTMMMMMVMRRGES. Over 36–193 the chain is Lumenal; it reads MRLDMESGNT…ELNRSTNSRM (158 aa). The 116-residue stretch at 45–160 folds into the GOLD domain; the sequence is TKCISDDIKT…ITMLEVEVRK (116 aa). A coiled-coil region spans residues 175–188; the sequence is LIEREREMQELNRS. Arg178 is subject to Omega-N-methylated arginine. N-linked (GlcNAc...) asparagine glycosylation is present at Asn186. The chain crosses the membrane as a helical span at residues 194–210; it reads AALSLLSFVVTMSVAGL. At 211–225 the chain is on the cytoplasmic side; it reads QLRHLKSFLERKKLL. The short motif at 218–219 is the COPII vesicle coat-binding element; sequence FL. The COPI vesicle coat-binding motif lies at 218 to 225; sequence FLERKKLL.

This sequence belongs to the EMP24/GP25L family. As to quaternary structure, probably oligomerizes with other members of the EMP24/GP25L family. Associates with the COPI vesicle coat (coatomer). Associates with the COPII vesicle coat (coatomer).

Its subcellular location is the endoplasmic reticulum membrane. The protein resides in the golgi apparatus. The protein localises to the cis-Golgi network membrane. It is found in the golgi stack membrane. In terms of biological role, involved in vesicular protein trafficking. Mainly functions in the early secretory pathway. Thought to act as cargo receptor at the lumenal side for incorporation of secretory cargo molecules into transport vesicles and to be involved in vesicle coat formation at the cytoplasmic side. The chain is Transmembrane emp24 domain-containing protein p24delta11 from Arabidopsis thaliana (Mouse-ear cress).